A 5255-amino-acid chain; its full sequence is SCO-spondin (5255 aa).

Residues 1-18 (MGIVATVLLWVVTEAARG) form the signal peptide. Residues 19–111 (RWCERTEQVT…ACCAGWSGPH (93 aa)) enclose the EMI domain. 4 N-linked (GlcNAc...) asparagine glycosylation sites follow: asparagine 97, asparagine 136, asparagine 156, and asparagine 255. The 167-residue stretch at 192-358 (ASCTVWAGSR…PDANPELSCS (167 aa)) folds into the VWFD 1 domain. 2 disulfides stabilise this stretch: cysteine 194–cysteine 317 and cysteine 216–cysteine 357. The TIL 1 domain maps to 453 to 508 (CGHGQRYSDCVSSCPASCMAAGTAEEGHCRDDCASGCECTPGLLLDRGACIPQSAC). The VWFC 1 domain maps to 508–601 (CPCLHRGHIY…CGGHQPLSCL (94 aa)). The VWFD 2 domain occupies 546–717 (AECAVLGDLH…NKYRVSTDCP (172 aa)). 3 disulfide bridges follow: cysteine 548–cysteine 681, cysteine 570–cysteine 716, and cysteine 592–cysteine 600. The N-linked (GlcNAc...) asparagine glycan is linked to asparagine 801. In terms of domain architecture, TIL 2 spans 809–868 (CRGGQVYQECSSPCGRTCADLRLDGASSCPSLDNICVSGCNCPEGPVLDDGGQCVPPGVC). Residues 868–926 (CPCQHSSQLYPAGSKIRQGCNACMCTAGTWSCTDAPCPDAAFCPGDLVYVFGSCLRTCD) form the VWFC 2 domain. Asparagine 931 and asparagine 972 each carry an N-linked (GlcNAc...) asparagine glycan. The VWFD 3 domain occupies 998–1168 (GTCVATGDPH…NSWRVSLLCP (171 aa)). Cystine bridges form between cysteine 1000-cysteine 1132, cysteine 1022-cysteine 1167, and cysteine 1043-cysteine 1050. The TIL 3 domain maps to 1263-1319 (CDGGQEYSACGPPCPQTCRNLGLELPEHCDTMSCLEGCFCPEGKVLHEGSCIDPAEC). Asparagine 1340 carries an N-linked (GlcNAc...) asparagine glycan. 6 consecutive LDL-receptor class A domains span residues 1362 to 1398 (HCPD…EVCA), 1400 to 1436 (HCAP…RGCP), 1439 to 1477 (PCAP…AGCS), 1479 to 1515 (SCSV…RGCV), 1515 to 1551 (VCPA…AFCP), and 1555 to 1593 (TCAP…VRCM). 18 disulfide bridges follow: cysteine 1363–cysteine 1376, cysteine 1370–cysteine 1389, cysteine 1383–cysteine 1397, cysteine 1401–cysteine 1413, cysteine 1408–cysteine 1426, cysteine 1420–cysteine 1435, cysteine 1440–cysteine 1452, cysteine 1447–cysteine 1465, cysteine 1459–cysteine 1476, cysteine 1480–cysteine 1492, cysteine 1487–cysteine 1505, cysteine 1499–cysteine 1514, cysteine 1516–cysteine 1528, cysteine 1523–cysteine 1541, cysteine 1535–cysteine 1550, cysteine 1556–cysteine 1568, cysteine 1563–cysteine 1581, and cysteine 1575–cysteine 1592. Asparagine 1610 carries an N-linked (GlcNAc...) asparagine glycan. LDL-receptor class A domains are found at residues 1616 to 1652 (VCGP…LGCN), 1654 to 1693 (SCVL…DNCG), and 1699 to 1734 (PCPG…LACE). 3 disulfides stabilise this stretch: cysteine 1617–cysteine 1629, cysteine 1624–cysteine 1642, and cysteine 1636–cysteine 1651. A glycan (N-linked (GlcNAc...) asparagine) is linked at asparagine 1652. Disulfide bonds link cysteine 1655–cysteine 1668, cysteine 1662–cysteine 1681, cysteine 1675–cysteine 1692, cysteine 1700–cysteine 1711, cysteine 1706–cysteine 1724, and cysteine 1718–cysteine 1733. Asparagine 1713 is a glycosylation site (N-linked (GlcNAc...) asparagine). Asparagine 1743 carries an N-linked (GlcNAc...) asparagine glycan. The region spanning 1748–1790 (PCAEYSCRDGDCITFKQVCNGLPDCRDGDMASGWLPSDEWDCG) is the LDL-receptor class A 10 domain. Cystine bridges form between cysteine 1749-cysteine 1759, cysteine 1754-cysteine 1772, cysteine 1766-cysteine 1789, cysteine 1801-cysteine 1837, cysteine 1805-cysteine 1842, and cysteine 1816-cysteine 1827. 2 consecutive TSP type-1 domains span residues 1789–1843 (CGQW…TACP) and 1845–1903 (DGAW…DGCP). N-linked (GlcNAc...) asparagine glycosylation occurs at asparagine 1856. Intrachain disulfides connect cysteine 1857/cysteine 1897, cysteine 1861/cysteine 1902, and cysteine 1871/cysteine 1881. Positions 1907 to 1961 (CPGGLQPRPCAPCPASCADLASRAPCRREQCTPGCWCAEGLVLDGERGCVRPREC) constitute a TIL 4 domain. 2 EGF-like domains span residues 1919–1956 (CPAS…RGCV) and 1957–1983 (RPRE…CRLC). One can recognise a VWFC 3 domain in the interval 1961 to 2019 (CRCEVDGLRYWPGQRMKLNCRLCTCLDGQPRRCRHNPACSVSCSWSAWSPWGECLGPCG). One can recognise a TSP type-1 3 domain in the interval 2002–2058 (SCSWSAWSPWGECLGPCGVQSIQWSFRSPSHPGKHGTNRQCRGIYRKARRCQTEPCQ). 3 disulfide bridges follow: cysteine 2003-cysteine 2042, cysteine 2014-cysteine 2018, and cysteine 2052-cysteine 2057. Residues 2058–2120 (QECEHQGRSR…GKGDSCCFCA (63 aa)) form the VWFC 4 domain. Residues asparagine 2125 and asparagine 2230 are each glycosylated (N-linked (GlcNAc...) asparagine). Intrachain disulfides connect cysteine 2162-cysteine 2310, cysteine 2328-cysteine 2339, cysteine 2335-cysteine 2352, and cysteine 2346-cysteine 2361. One can recognise an F5/8 type C domain in the interval 2162–2310 (CYSPLGIASL…IFLRAELLGC (149 aa)). The LDL-receptor class A 11 domain occupies 2327 to 2362 (PCGTGEFWCGVSCVTASRRCDGATDCPGGADEAGCE). The interval 2352-2373 (CPGGADEAGCEPPSSTTLPTHP) is disordered. Over residues 2364–2373 (PSSTTLPTHP) the composition is skewed to polar residues. 2 consecutive LDL-receptor class A domains span residues 2481–2517 (LCPP…AHCG) and 2538–2574 (TCSP…SSCA). 12 disulfides stabilise this stretch: cysteine 2482–cysteine 2494, cysteine 2489–cysteine 2507, cysteine 2501–cysteine 2516, cysteine 2539–cysteine 2551, cysteine 2546–cysteine 2564, cysteine 2558–cysteine 2573, cysteine 2576–cysteine 2612, cysteine 2587–cysteine 2591, cysteine 2622–cysteine 2627, cysteine 2642–cysteine 2679, cysteine 2646–cysteine 2684, and cysteine 2657–cysteine 2669. TSP type-1 domains lie at 2575-2628 (DCIL…RACP) and 2630-2685 (PGAW…QPCG). The 43-residue stretch at 2708-2750 (PPCPQVCGDLSATSSCQSPCQEGCRCPPGLFLQEGTCVNASQC) folds into the TIL 5 domain. Asparagine 2746 carries N-linked (GlcNAc...) asparagine glycosylation. TSP type-1 domains are found at residues 2790-2844 (ACAW…TPCA), 2849-2903 (SSGW…APCP), and 2905-2958 (AGVW…RPCG). 9 cysteine pairs are disulfide-bonded: cysteine 2791/cysteine 2829, cysteine 2802/cysteine 2806, cysteine 2839/cysteine 2843, cysteine 2861/cysteine 2897, cysteine 2865/cysteine 2902, cysteine 2881/cysteine 2887, cysteine 2917/cysteine 2952, cysteine 2921/cysteine 2957, and cysteine 2932/cysteine 2942. One can recognise a TIL 6 domain in the interval 2971–3020 (EECRHSEGRCPWICQDLGAGVACTAQCQPGCHCPAGLLLQNGTCVPPSHC). N-linked (GlcNAc...) asparagine glycans are attached at residues asparagine 3011, asparagine 3042, and asparagine 3065. The region spanning 3020-3077 (CLCHHRGHLYQPGDINALDTCNNCTCVTGQMVCSTETCPVPCTWSNWTAWSTCSHSCD) is the VWFC 5 domain. TSP type-1 domains lie at 3060 to 3115 (PCTW…QPCR) and 3117 to 3158 (VAPW…APCP). 3 cysteine pairs are disulfide-bonded: cysteine 3061–cysteine 3099, cysteine 3072–cysteine 3076, and cysteine 3109–cysteine 3114. Asparagine 3136 is a glycosylation site (N-linked (GlcNAc...) asparagine). The TIL 7 domain maps to 3165–3217 (CPPGKQWQACAQGAASCAELSAAPPADGSCHPGCYCPPGALLLNNECVAEAAC). A VWFC 6 domain is found at 3217–3275 (CPCAVDGVLYQPGDVVPQGCHNCSCIAGRVTNCSQEDCGDVDGPWTPWTPWSECSASCG). N-linked (GlcNAc...) asparagine glycans are attached at residues asparagine 3238 and asparagine 3248. Residues 3258–3309 (DGPWTPWTPWSECSASCGPGRQRRYRFCSAHPGVPCAEPQPQERPCARQPCH) form the TSP type-1 11 domain. 3 disulfides stabilise this stretch: cysteine 3270–cysteine 3303, cysteine 3274–cysteine 3308, and cysteine 3285–cysteine 3293. Asparagine 3350, asparagine 3366, and asparagine 3392 each carry an N-linked (GlcNAc...) asparagine glycan. 2 TSP type-1 domains span residues 3410 to 3475 (PGAW…PPCP) and 3477 to 3532 (DGAW…SSCP). Intrachain disulfides connect cysteine 3422–cysteine 3468, cysteine 3426–cysteine 3474, cysteine 3437–cysteine 3449, cysteine 3489–cysteine 3524, cysteine 3492–cysteine 3531, and cysteine 3502–cysteine 3514. The TIL 8 domain maps to 3534–3589 (CAGGLVAFTCGKPCPHSCEDLREDTACMATPRCLPACACPHGQLLQDGDCVPPELC). Asparagine 3598 and asparagine 3625 each carry an N-linked (GlcNAc...) asparagine glycan. TSP type-1 domains follow at residues 3644 to 3700 (DGGW…EGCP) and 3702 to 3751 (EEPW…HVCR). 6 disulfide bridges follow: cysteine 3656/cysteine 3693, cysteine 3660/cysteine 3699, cysteine 3671/cysteine 3683, cysteine 3714/cysteine 3745, cysteine 3718/cysteine 3750, and cysteine 3729/cysteine 3735. N-linked (GlcNAc...) asparagine glycans are attached at residues asparagine 3823 and asparagine 3869. TSP type-1 domains lie at 3878–3934 (DGGF…PECP), 3951–4004 (EEGF…PLCS), 4018–4074 (NCSW…QACK), and 4076–4131 (DGAW…QPCD). 6 disulfides stabilise this stretch: cysteine 3890–cysteine 3928, cysteine 3894–cysteine 3933, cysteine 3906–cysteine 3918, cysteine 3963–cysteine 3998, cysteine 3967–cysteine 4003, and cysteine 3982–cysteine 3988. The segment at 3932–3951 (ECPAVPTTEPGPGVAGAEEE) is disordered. Asparagine 4018 is a glycosylation site (N-linked (GlcNAc...) asparagine). Intrachain disulfides connect cysteine 4019-cysteine 4055, cysteine 4030-cysteine 4034, cysteine 4068-cysteine 4073, cysteine 4088-cysteine 4125, cysteine 4092-cysteine 4130, and cysteine 4103-cysteine 4115. One can recognise a TIL 9 domain in the interval 4134-4189 (CPPGMALVTCANHCPRHCGDLQEGIVCREEEHCEPGCRCPNGTLEQDGGCVPLAHC). 2 N-linked (GlcNAc...) asparagine glycosylation sites follow: asparagine 4174 and asparagine 4211. 3 consecutive TSP type-1 domains span residues 4230 to 4282 (RCPW…GPCP), 4322 to 4384 (GAEH…RPCP), and 4386 to 4433 (ECSW…SGCS). 3 disulfides stabilise this stretch: cysteine 4231/cysteine 4266, cysteine 4242/cysteine 4246, and cysteine 4276/cysteine 4281. Asparagine 4362 carries N-linked (GlcNAc...) asparagine glycosylation. 3 disulfides stabilise this stretch: cysteine 4387–cysteine 4417, cysteine 4398–cysteine 4400, and cysteine 4427–cysteine 4432. Asparagine 4428 carries N-linked (GlcNAc...) asparagine glycosylation. One can recognise a TIL 10 domain in the interval 4437–4492 (CEPPFEFQPCSPPCARLCSTLQHPELCPAQSHCLPGCFCPQGLLEQRSACVPPEQC). Residue asparagine 4498 is glycosylated (N-linked (GlcNAc...) asparagine). TSP type-1 domains lie at 4537 to 4608 (LPLS…DICQ) and 4610 to 4662 (LCLW…AVCP). 6 cysteine pairs are disulfide-bonded: cysteine 4548-cysteine 4601, cysteine 4551-cysteine 4607, cysteine 4575-cysteine 4591, cysteine 4611-cysteine 4646, cysteine 4622-cysteine 4626, and cysteine 4656-cysteine 4661. The 48-residue stretch at 4675–4722 (TTCANSCPRACADLWQHVECVQGGCKPGCRCPQGQLLQDGLCVPTAQC) folds into the TIL 11 domain. N-linked (GlcNAc...) asparagine glycans are attached at residues asparagine 4730, asparagine 4747, and asparagine 4752. 2 TSP type-1 domains span residues 4762 to 4815 (CPSY…QPCP) and 4817 to 4869 (GCQL…HNCT). Intrachain disulfides connect cysteine 4774–cysteine 4809, cysteine 4778–cysteine 4814, cysteine 4789–cysteine 4798, cysteine 4818–cysteine 4852, cysteine 4829–cysteine 4833, and cysteine 4863–cysteine 4868. A glycan (N-linked (GlcNAc...) asparagine) is linked at asparagine 4867. The TIL 12 domain maps to 4872 to 4926 (CPRSQVHRECANACPHACADLRPQTQCLPQPCQPGCACPPGQVLQDGACVPPEEC). N-linked (GlcNAc...) asparagine glycosylation is found at asparagine 4939 and asparagine 4970. One can recognise a TSP type-1 27 domain in the interval 4979–5033 (DCLWSPWSPWSPCSVTCGMGERLSHRHPLRQRLYEGAECLGPPVRRAACHLPDCA). 3 cysteine pairs are disulfide-bonded: cysteine 4980-cysteine 5017, cysteine 4991-cysteine 4995, and cysteine 5027-cysteine 5032. 3 N-linked (GlcNAc...) asparagine glycosylation sites follow: asparagine 5081, asparagine 5122, and asparagine 5169. A VWFC 7 domain is found at 5092-5150 (CECLHQGQLHQPGSEWQEQCARCRCVDGKANCTDGCTPLSCPEGEVKVREPGRCCPVCR). 4 cysteine pairs are disulfide-bonded: cysteine 5161/cysteine 5209, cysteine 5175/cysteine 5226, cysteine 5185/cysteine 5242, and cysteine 5189/cysteine 5244. Residues 5161 to 5248 (CRRFTELRNI…IHSCECSSCQ (88 aa)) enclose the CTCK domain.

This sequence belongs to the thrombospondin family.

The protein localises to the secreted. It localises to the extracellular space. Its function is as follows. Involved in the modulation of neuronal aggregation. May be involved in developmental events during the formation of the central nervous system. In Gallus gallus (Chicken), this protein is SCO-spondin (SSPO).